The chain runs to 71 residues: Large ribosomal subunit protein uL30 (71 aa).

Belongs to the universal ribosomal protein uL30 family. In terms of assembly, part of the 50S ribosomal subunit.

The protein is Large ribosomal subunit protein uL30 of Borreliella burgdorferi (strain ATCC 35210 / DSM 4680 / CIP 102532 / B31) (Borrelia burgdorferi).